The sequence spans 530 residues: Phosphoenolpyruvate carboxykinase (ATP) (530 aa).

3 residues coordinate substrate: Arg-58, Tyr-195, and Lys-201. Residues Lys-201, His-220, and 236-244 each bind ATP; that span reads GLSGTGKTT. The Mn(2+) site is built by Lys-201 and His-220. Mn(2+) is bound at residue Asp-257. Residues Glu-285, Arg-321, 440–441, and Thr-446 each bind ATP; that span reads RI. Position 321 (Arg-321) interacts with substrate.

This sequence belongs to the phosphoenolpyruvate carboxykinase (ATP) family. Mn(2+) is required as a cofactor.

It localises to the cytoplasm. The catalysed reaction is oxaloacetate + ATP = phosphoenolpyruvate + ADP + CO2. It participates in carbohydrate biosynthesis; gluconeogenesis. Involved in the gluconeogenesis. Catalyzes the conversion of oxaloacetate (OAA) to phosphoenolpyruvate (PEP) through direct phosphoryl transfer between the nucleoside triphosphate and OAA. The sequence is that of Phosphoenolpyruvate carboxykinase (ATP) from Staphylococcus aureus (strain MSSA476).